A 128-amino-acid chain; its full sequence is Small ribosomal subunit protein uS13 (128 aa).

Positions 95-118 (GLPVRGQRTHTNARTRKGPKKGLV) are enriched in basic residues. The interval 95–128 (GLPVRGQRTHTNARTRKGPKKGLVRKAAAPAPMA) is disordered.

This sequence belongs to the universal ribosomal protein uS13 family. Part of the 30S ribosomal subunit. Forms a loose heterodimer with protein S19. Forms two bridges to the 50S subunit in the 70S ribosome.

Functionally, located at the top of the head of the 30S subunit, it contacts several helices of the 16S rRNA. In the 70S ribosome it contacts the 23S rRNA (bridge B1a) and protein L5 of the 50S subunit (bridge B1b), connecting the 2 subunits; these bridges are implicated in subunit movement. Contacts the tRNAs in the A and P-sites. The chain is Small ribosomal subunit protein uS13 from Anaeromyxobacter dehalogenans (strain 2CP-1 / ATCC BAA-258).